The sequence spans 102 residues: Large ribosomal subunit protein bL21 (102 aa).

This sequence belongs to the bacterial ribosomal protein bL21 family. Part of the 50S ribosomal subunit. Contacts protein L20.

Its function is as follows. This protein binds to 23S rRNA in the presence of protein L20. In Zymomonas mobilis subsp. mobilis (strain ATCC 31821 / ZM4 / CP4), this protein is Large ribosomal subunit protein bL21.